We begin with the raw amino-acid sequence, 129 residues long: Large ribosomal subunit protein bL19c (129 aa).

The protein belongs to the bacterial ribosomal protein bL19 family.

It is found in the plastid. This is Large ribosomal subunit protein bL19c from Prototheca wickerhamii.